Here is a 144-residue protein sequence, read N- to C-terminus: Large ribosomal subunit protein uL13 (144 aa).

It belongs to the universal ribosomal protein uL13 family. As to quaternary structure, part of the 50S ribosomal subunit.

Its function is as follows. This protein is one of the early assembly proteins of the 50S ribosomal subunit, although it is not seen to bind rRNA by itself. It is important during the early stages of 50S assembly. This Clostridium perfringens (strain 13 / Type A) protein is Large ribosomal subunit protein uL13.